Consider the following 272-residue polypeptide: Phosphate import ATP-binding protein PstB (272 aa).

An ABC transporter domain is found at 18 to 257 (VSIQNATISY…FNDTDKIFNA (240 aa)). 50–57 (GPSGCGKS) contributes to the ATP binding site.

The protein belongs to the ABC transporter superfamily. Phosphate importer (TC 3.A.1.7) family. As to quaternary structure, the complex is composed of two ATP-binding proteins (PstB), two transmembrane proteins (PstC and PstA) and a solute-binding protein (PstS).

The protein resides in the cell inner membrane. The catalysed reaction is phosphate(out) + ATP + H2O = ADP + 2 phosphate(in) + H(+). Its function is as follows. Part of the ABC transporter complex PstSACB involved in phosphate import. Responsible for energy coupling to the transport system. The protein is Phosphate import ATP-binding protein PstB of Synechococcus sp. (strain CC9311).